We begin with the raw amino-acid sequence, 367 residues long: Peptide chain release factor 1 (367 aa).

Position 238 is an N5-methylglutamine (Gln238).

The protein belongs to the prokaryotic/mitochondrial release factor family. Post-translationally, methylated by PrmC. Methylation increases the termination efficiency of RF1.

The protein localises to the cytoplasm. Peptide chain release factor 1 directs the termination of translation in response to the peptide chain termination codons UAG and UAA. The polypeptide is Peptide chain release factor 1 (Dictyoglomus thermophilum (strain ATCC 35947 / DSM 3960 / H-6-12)).